Reading from the N-terminus, the 688-residue chain is SRSF protein kinase 2 (688 aa).

The segment at 1–65 (MSVNSEKSSS…EQEDPADYCK (65 aa)) is disordered. A compositionally biased stretch (pro residues) spans 22-43 (LVPPPPPPPPPPPPPLPDPTPP). Over residues 44-61 (EPEEEILGSDDEEQEDPA) the composition is skewed to acidic residues. Residue serine 52 is modified to Phosphoserine. Positions 81 to 684 (YHVIRKLGWG…ASAGECLRHP (604 aa)) constitute a Protein kinase domain. ATP is bound by residues 87–95 (LGWGHFSTV) and lysine 110. Aspartate 214 (proton acceptor) is an active-site residue. Disordered regions lie at residues 239–277 (WQKA…KKQK), 329–444 (GLEE…GRHK), and 469–501 (SVLS…TGDL). A compositionally biased stretch (basic residues) spans 265 to 277 (SKNKKKKLKKKQK). Serine 380 carries the phosphoserine modification. Acidic residues predominate over residues 397–421 (QLDDEDDDEEDCPNPEEYNLDEPNA). The segment covering 423–433 (SDYTYSSSYEQ) has biased composition (polar residues). Serine 475 is subject to Phosphoserine. Threonine 478 carries the post-translational modification Phosphothreonine. Phosphoserine occurs at positions 484, 486, and 490. Threonine 492 is modified (phosphothreonine; by PKB/AKT1). Serine 494 and serine 497 each carry phosphoserine. Serine 588 is modified (phosphoserine; by CK2).

Belongs to the protein kinase superfamily. CMGC Ser/Thr protein kinase family. Associates with U4/U6-U5 tri-small nuclear ribonucleoproteins (U4/U6-U5 tri-snRNPs). Interacts with PKB/AKT1 in a phosphorylation-dependent manner. The phosphorylated form (by PKB/AKT1) interacts with YWHAB and YWHAE. Interaction with YWHAB suppresses its cleavage by caspases and inhibits the release of its N-terminal pro-apoptotic fragment. Interacts with SFN. Interacts with ACIN1. Interacts with POLR2A/RNA polymerase II; the interaction occurs during the co-transcriptional formation of inappropriate R-loops. Mg(2+) serves as cofactor. In terms of processing, phosphorylation at Thr-492 by PKB/AKT1 enhances its stimulatory activity in triggering cyclin-D1 (CCND1) expression and promoting apoptosis in neurons, which can be blocked by YWHAB. It also enhances its protein kinase activity toward ACIN1 and SRSF2, promotes its nuclear translocation and prevents its proteolytic cleavage. Proteolytically cleaved at Asp-139 and Asp-403 by caspase-3 during apoptotic cell death. Cleavage at Asp-139 which is the major site of cleavage, produces a small N-terminal fragment that translocates into nucleus and promotes VP16-induced apoptosis. Highly expressed in brain, moderately expressed in heart and skeletal muscle and at low levels in lung, liver, and kidney.

It localises to the cytoplasm. Its subcellular location is the nucleus. It is found in the nucleoplasm. The protein localises to the nucleus speckle. The protein resides in the chromosome. It catalyses the reaction L-seryl-[protein] + ATP = O-phospho-L-seryl-[protein] + ADP + H(+). The enzyme catalyses L-threonyl-[protein] + ATP = O-phospho-L-threonyl-[protein] + ADP + H(+). With respect to regulation, activated by phosphorylation on Ser-52 and Ser-588. In terms of biological role, serine/arginine-rich protein-specific kinase which specifically phosphorylates its substrates at serine residues located in regions rich in arginine/serine dipeptides, known as RS domains and is involved in the phosphorylation of SR splicing factors and the regulation of splicing. Promotes neuronal apoptosis by up-regulating cyclin-D1 (CCND1) expression. This is done by the phosphorylation of SRSF2, leading to the suppression of p53/TP53 phosphorylation thereby relieving the repressive effect of p53/TP53 on cyclin-D1 (CCND1) expression. Phosphorylates ACIN1, and redistributes it from the nuclear speckles to the nucleoplasm, resulting in cyclin A1 but not cyclin A2 up-regulation. Plays an essential role in spliceosomal B complex formation via the phosphorylation of DDX23/PRP28. Probably by phosphorylating DDX23, leads to the suppression of incorrect R-loops formed during transcription; R-loops are composed of a DNA:RNA hybrid and the associated non-template single-stranded DNA. Can mediate hepatitis B virus (HBV) core protein phosphorylation. Plays a negative role in the regulation of HBV replication through a mechanism not involving the phosphorylation of the core protein but by reducing the packaging efficiency of the pregenomic RNA (pgRNA) without affecting the formation of the viral core particles. The chain is SRSF protein kinase 2 from Homo sapiens (Human).